A 123-amino-acid polypeptide reads, in one-letter code: Ragulator complex protein LAMTOR3-A (123 aa).

The protein belongs to the LAMTOR3 family. As to quaternary structure, part of the Ragulator complex composed of lamtor1, lamtor2, lamtor3, lamtor4 and lamtor5. The Ragulator complex interacts with slc38a9; the probable amino acid sensor. Component of the lysosomal folliculin complex (LFC).

Its subcellular location is the late endosome membrane. In terms of biological role, as part of the Ragulator complex it is involved in amino acid sensing and activation of mTORC1, a signaling complex promoting cell growth in response to growth factors, energy levels, and amino acids. Activated by amino acids through a mechanism involving the lysosomal V-ATPase, the Ragulator plays a dual role for the small GTPases Rag (RagA/RRAGA, RagB/RRAGB, RagC/RRAGC and/or RagD/RRAGD): it (1) acts as a guanine nucleotide exchange factor (GEF), activating the small GTPases Rag and (2) mediates recruitment of Rag GTPases to the lysosome membrane. Activated Ragulator and Rag GTPases function as a scaffold recruiting mTORC1 to lysosomes where it is in turn activated. The polypeptide is Ragulator complex protein LAMTOR3-A (lamtor3-a) (Xenopus laevis (African clawed frog)).